The primary structure comprises 105 residues: Malonate decarboxylase acyl carrier protein (105 aa).

Position 28 is an O-(phosphoribosyl dephospho-coenzyme A)serine (serine 28).

This sequence belongs to the MdcC family. Covalently binds the prosthetic group of malonate decarboxylase.

The protein localises to the cytoplasm. In terms of biological role, subunit of malonate decarboxylase, it is an acyl carrier protein to which acetyl and malonyl thioester residues are bound via a 2'-(5''-phosphoribosyl)-3'-dephospho-CoA prosthetic group and turn over during the catalytic mechanism. This Xanthomonas euvesicatoria pv. vesicatoria (strain 85-10) (Xanthomonas campestris pv. vesicatoria) protein is Malonate decarboxylase acyl carrier protein.